The chain runs to 266 residues: Probable catechol O-methyltransferase 1 (266 aa).

Residues isoleucine 56, glutamate 78, serine 86, glutamate 106, valine 107, alanine 135, and aspartate 162 each coordinate S-adenosyl-L-methionine. Aspartate 162 serves as a coordination point for Mg(2+). Substrate is bound at residue lysine 165. Positions 190 and 191 each coordinate Mg(2+). A substrate-binding site is contributed by asparagine 191.

The protein belongs to the class I-like SAM-binding methyltransferase superfamily. Cation-dependent O-methyltransferase family. Mg(2+) is required as a cofactor.

The protein localises to the cytoplasm. Its subcellular location is the nucleus. It catalyses the reaction a catechol + S-adenosyl-L-methionine = a guaiacol + S-adenosyl-L-homocysteine + H(+). The protein is Probable catechol O-methyltransferase 1 of Schizosaccharomyces pombe (strain 972 / ATCC 24843) (Fission yeast).